Reading from the N-terminus, the 538-residue chain is AAA ATPase forming ring-shaped complexes (538 aa).

Residues 14–54 are a coiled coil; it reads ARELRLANHRLGAQNEKLTEALKASREKLAEINSRLADMAE. 240–245 provides a ligand contact to ATP; that stretch reads GNGKTL.

The protein belongs to the AAA ATPase family. In terms of assembly, homohexamer. Assembles into a hexameric ring structure.

This Corynebacterium urealyticum (strain ATCC 43042 / DSM 7109) protein is AAA ATPase forming ring-shaped complexes.